The sequence spans 344 residues: 3,4-dihydroxy-2-butanone 4-phosphate synthase (344 aa).

The interval 1–202 is DHBP synthase; the sequence is MILKRVTEAL…VSDLISYRLE (202 aa). D-ribulose 5-phosphate is bound by residues 27–28, Asp32, 139–143, and Glu163; these read RE and RTGHT. Glu28 lines the Mg(2+) pocket. A Mg(2+)-binding site is contributed by His142. The GTP cyclohydrolase II-like stretch occupies residues 203–344; it reads NESLLKMFCQ…GLKLVETISL (142 aa).

It in the N-terminal section; belongs to the DHBP synthase family. The protein in the C-terminal section; belongs to the GTP cyclohydrolase II family. Requires Mg(2+) as cofactor. It depends on Mn(2+) as a cofactor.

It catalyses the reaction D-ribulose 5-phosphate = (2S)-2-hydroxy-3-oxobutyl phosphate + formate + H(+). It participates in cofactor biosynthesis; riboflavin biosynthesis; 2-hydroxy-3-oxobutyl phosphate from D-ribulose 5-phosphate: step 1/1. In terms of biological role, catalyzes the conversion of D-ribulose 5-phosphate to formate and 3,4-dihydroxy-2-butanone 4-phosphate. This chain is 3,4-dihydroxy-2-butanone 4-phosphate synthase (ribB), found in Helicobacter pylori (strain ATCC 700392 / 26695) (Campylobacter pylori).